A 261-amino-acid polypeptide reads, in one-letter code: tRNA pseudouridine synthase A (261 aa).

Catalysis depends on D51, which acts as the Nucleophile. Residue Y109 coordinates substrate.

Belongs to the tRNA pseudouridine synthase TruA family. Homodimer.

The enzyme catalyses uridine(38/39/40) in tRNA = pseudouridine(38/39/40) in tRNA. Functionally, formation of pseudouridine at positions 38, 39 and 40 in the anticodon stem and loop of transfer RNAs. In Shewanella piezotolerans (strain WP3 / JCM 13877), this protein is tRNA pseudouridine synthase A.